We begin with the raw amino-acid sequence, 209 residues long: MDEILKYFPNLTDLQIEQFQKLDFLYHNWNEKINVISRKDIDSLYTKHILHSLGIAKVMKFEPGTTVLDVGTGGGFPGIPLAILFPETRFYLIDVIAKKIKVVQGVVDALELKNVKAEQKRAELVKGDFDFIVSRAVTNMPDFVSWIKDKIKKQHKHKLKNGILYLKGGDLSEELKDFPAATLYDLSEIFEDEFFETKKVVHLPLKFKP.

Residues Gly71, Phe76, 122-123 (AE), and Arg135 each bind S-adenosyl-L-methionine.

It belongs to the methyltransferase superfamily. RNA methyltransferase RsmG family.

It is found in the cytoplasm. Specifically methylates the N7 position of a guanine in 16S rRNA. This chain is Ribosomal RNA small subunit methyltransferase G, found in Flavobacterium johnsoniae (strain ATCC 17061 / DSM 2064 / JCM 8514 / BCRC 14874 / CCUG 350202 / NBRC 14942 / NCIMB 11054 / UW101) (Cytophaga johnsonae).